Reading from the N-terminus, the 221-residue chain is MAGGGQVVLRTLSQQGWVRGSGAAVLSRLQDAAVVRPGFLSTAEEETLSRELEPELRRRRYEYDHWDAAIHGFRETEKSRWSEASRAILRRVQAAAFGPGQTLLSSVHVLDLEPQGYIKPHVDSIKFCGSTIAGLSLLSPSVMRLVHTQEPGEWLELLLEPGSLYILRGSARYDFSHEILRDEESFFGERRIPRGRRISVICRSLPEGMGPGEPGQLPPAC.

Residues 1 to 23 (MAGGGQVVLRTLSQQGWVRGSGA) constitute a mitochondrion transit peptide. Residues His-121 and Asp-123 each coordinate Fe cation. Tyr-165 provides a ligand contact to 2-oxoglutarate. A Fe cation-binding site is contributed by His-177. 2-oxoglutarate-binding positions include 197-199 (RIS) and Arg-203.

Belongs to the alkB family. Requires Fe(2+) as cofactor.

The protein localises to the mitochondrion matrix. May function as protein hydroxylase; can catalyze auto-hydroxylation at Leu-110 (in vitro), but this activity may be due to the absence of the true substrate. Required to induce programmed necrosis in response to DNA damage caused by cytotoxic alkylating agents. Acts by triggering the collapse of mitochondrial membrane potential and loss of mitochondrial function that leads to energy depletion and cell death. ALKBH7-mediated necrosis is probably required to prevent the accumulation of cells with DNA damage. Does not display DNA demethylase activity. Involved in fatty acid metabolism. In Bos taurus (Bovine), this protein is Alpha-ketoglutarate-dependent dioxygenase alkB homolog 7, mitochondrial (ALKBH7).